A 339-amino-acid polypeptide reads, in one-letter code: Tetraacyldisaccharide 4'-kinase (339 aa).

61–68 (TAGGTGKT) contributes to the ATP binding site.

Belongs to the LpxK family.

It catalyses the reaction a lipid A disaccharide + ATP = a lipid IVA + ADP + H(+). The protein operates within glycolipid biosynthesis; lipid IV(A) biosynthesis; lipid IV(A) from (3R)-3-hydroxytetradecanoyl-[acyl-carrier-protein] and UDP-N-acetyl-alpha-D-glucosamine: step 6/6. Its function is as follows. Transfers the gamma-phosphate of ATP to the 4'-position of a tetraacyldisaccharide 1-phosphate intermediate (termed DS-1-P) to form tetraacyldisaccharide 1,4'-bis-phosphate (lipid IVA). The chain is Tetraacyldisaccharide 4'-kinase from Stenotrophomonas maltophilia (strain R551-3).